The sequence spans 281 residues: Large ribosomal subunit protein uL2 (281 aa).

The tract at residues 213–281 (RNRHKGIRPT…LIIRRRKESK (69 aa)) is disordered.

The protein belongs to the universal ribosomal protein uL2 family. Part of the 50S ribosomal subunit. Forms a bridge to the 30S subunit in the 70S ribosome.

Its function is as follows. One of the primary rRNA binding proteins. Required for association of the 30S and 50S subunits to form the 70S ribosome, for tRNA binding and peptide bond formation. It has been suggested to have peptidyltransferase activity; this is somewhat controversial. Makes several contacts with the 16S rRNA in the 70S ribosome. This chain is Large ribosomal subunit protein uL2, found in Mycoplasmopsis pulmonis (strain UAB CTIP) (Mycoplasma pulmonis).